We begin with the raw amino-acid sequence, 304 residues long: Oxygen-dependent coproporphyrinogen-III oxidase (304 aa).

Serine 94 serves as a coordination point for substrate. Residues histidine 98 and histidine 108 each coordinate a divalent metal cation. Catalysis depends on histidine 108, which acts as the Proton donor. Residue 110-112 participates in substrate binding; that stretch reads NVR. 2 residues coordinate a divalent metal cation: histidine 147 and histidine 177. Positions 242 to 277 are important for dimerization; it reads YVEFNLVYDRGTLFGLQTGGRTESILMSMPPLVRWE. 260–262 provides a ligand contact to substrate; the sequence is GGR.

Belongs to the aerobic coproporphyrinogen-III oxidase family. In terms of assembly, homodimer. The cofactor is a divalent metal cation.

Its subcellular location is the cytoplasm. It carries out the reaction coproporphyrinogen III + O2 + 2 H(+) = protoporphyrinogen IX + 2 CO2 + 2 H2O. It participates in porphyrin-containing compound metabolism; protoporphyrin-IX biosynthesis; protoporphyrinogen-IX from coproporphyrinogen-III (O2 route): step 1/1. In terms of biological role, involved in the heme biosynthesis. Catalyzes the aerobic oxidative decarboxylation of propionate groups of rings A and B of coproporphyrinogen-III to yield the vinyl groups in protoporphyrinogen-IX. The protein is Oxygen-dependent coproporphyrinogen-III oxidase of Shewanella halifaxensis (strain HAW-EB4).